A 392-amino-acid polypeptide reads, in one-letter code: Probable tRNA sulfurtransferase (392 aa).

The THUMP domain occupies 59 to 166; that stretch reads SCYREALKRV…DEGLFIYTTE (108 aa). ATP is bound by residues 186–187, 211–212, Arg-269, Gly-290, and Gln-299; these read LL and YF.

It belongs to the ThiI family.

It is found in the cytoplasm. The catalysed reaction is [ThiI sulfur-carrier protein]-S-sulfanyl-L-cysteine + a uridine in tRNA + 2 reduced [2Fe-2S]-[ferredoxin] + ATP + H(+) = [ThiI sulfur-carrier protein]-L-cysteine + a 4-thiouridine in tRNA + 2 oxidized [2Fe-2S]-[ferredoxin] + AMP + diphosphate. It carries out the reaction [ThiS sulfur-carrier protein]-C-terminal Gly-Gly-AMP + S-sulfanyl-L-cysteinyl-[cysteine desulfurase] + AH2 = [ThiS sulfur-carrier protein]-C-terminal-Gly-aminoethanethioate + L-cysteinyl-[cysteine desulfurase] + A + AMP + 2 H(+). It functions in the pathway cofactor biosynthesis; thiamine diphosphate biosynthesis. In terms of biological role, catalyzes the ATP-dependent transfer of a sulfur to tRNA to produce 4-thiouridine in position 8 of tRNAs, which functions as a near-UV photosensor. Also catalyzes the transfer of sulfur to the sulfur carrier protein ThiS, forming ThiS-thiocarboxylate. This is a step in the synthesis of thiazole, in the thiamine biosynthesis pathway. The sulfur is donated as persulfide by IscS. The chain is Probable tRNA sulfurtransferase from Coxiella burnetii (strain RSA 493 / Nine Mile phase I).